The chain runs to 295 residues: Replication-associated protein A (295 aa).

Residues 1-31 (MSSLPVSESEGEGSGTSVQVPSRGGQVTPGE) form a disordered region. In terms of domain architecture, CRESS-DNA virus Rep endonuclease spans 35 to 138 (SLRTKHVFLT…PESSWEFGKF (104 aa)). The RCR-1 motif lies at 42-45 (FLTY). Glu-76, His-84, and His-86 together coordinate a divalent metal cation. The RCR-2 signature appears at 84–86 (HLH). Catalysis depends on Tyr-124, which acts as the For DNA cleavage activity. Residues 124 to 127 (YCMK) carry the RCR-3 motif. The oligomerization stretch occupies residues 192 to 204 (SANALFPDPPQTY).

Belongs to the geminiviridae Rep protein family. Homooligomer. Part of the C- and V-complexes which are RepA-Rep-DNA complexes involved in the c-sense and v-sense transcription.

The protein resides in the host nucleus. It is found in the host cytoplasm. Functionally, implicated in enhancement of V-sense gene expression. Acts a an inhibitor of C-sense gene transcription. This is Replication-associated protein A from Avena sativa (Oat).